The chain runs to 418 residues: Glutamyl-tRNA reductase (418 aa).

Residues 49 to 52, Ser-109, 114 to 116, and Gln-120 contribute to the substrate site; these read TCNR and EPQ. Cys-50 serves as the catalytic Nucleophile. 189–194 lines the NADP(+) pocket; it reads GAGETI.

It belongs to the glutamyl-tRNA reductase family. Homodimer.

The catalysed reaction is (S)-4-amino-5-oxopentanoate + tRNA(Glu) + NADP(+) = L-glutamyl-tRNA(Glu) + NADPH + H(+). It participates in porphyrin-containing compound metabolism; protoporphyrin-IX biosynthesis; 5-aminolevulinate from L-glutamyl-tRNA(Glu): step 1/2. In terms of biological role, catalyzes the NADPH-dependent reduction of glutamyl-tRNA(Glu) to glutamate 1-semialdehyde (GSA). The protein is Glutamyl-tRNA reductase of Pectobacterium atrosepticum (strain SCRI 1043 / ATCC BAA-672) (Erwinia carotovora subsp. atroseptica).